We begin with the raw amino-acid sequence, 167 residues long: 2-C-methyl-D-erythritol 2,4-cyclodiphosphate synthase (167 aa).

Asp-11 and His-13 together coordinate a divalent metal cation. Residues 11-13 (DIH) and 37-38 (HS) each bind 4-CDP-2-C-methyl-D-erythritol 2-phosphate. His-45 provides a ligand contact to a divalent metal cation. Residues 59–61 (DIG), 64–68 (FSDTD), 103–109 (AQAPKMA), and Arg-145 contribute to the 4-CDP-2-C-methyl-D-erythritol 2-phosphate site.

Belongs to the IspF family. As to quaternary structure, homotrimer. A divalent metal cation serves as cofactor.

It carries out the reaction 4-CDP-2-C-methyl-D-erythritol 2-phosphate = 2-C-methyl-D-erythritol 2,4-cyclic diphosphate + CMP. The protein operates within isoprenoid biosynthesis; isopentenyl diphosphate biosynthesis via DXP pathway; isopentenyl diphosphate from 1-deoxy-D-xylulose 5-phosphate: step 4/6. Its function is as follows. Involved in the biosynthesis of isopentenyl diphosphate (IPP) and dimethylallyl diphosphate (DMAPP), two major building blocks of isoprenoid compounds. Catalyzes the conversion of 4-diphosphocytidyl-2-C-methyl-D-erythritol 2-phosphate (CDP-ME2P) to 2-C-methyl-D-erythritol 2,4-cyclodiphosphate (ME-CPP) with a corresponding release of cytidine 5-monophosphate (CMP). The polypeptide is 2-C-methyl-D-erythritol 2,4-cyclodiphosphate synthase (Nitrosomonas eutropha (strain DSM 101675 / C91 / Nm57)).